The following is a 151-amino-acid chain: Troponin C, isoallergen Bla g 6.0101 (151 aa).

4 consecutive EF-hand domains span residues 7–42 (EQIQ…LGHR), 43–78 (LDDD…FLVE), 83–118 (AMQQ…LDDK), and 119–151 (ITAE…MTGE). D56, D58, S60, E62, and E67 together coordinate Ca(2+). Residues D132, D134, S136, T138, and E143 each contribute to the Ca(2+) site.

This sequence belongs to the troponin C family.

Its function is as follows. Troponin is the central regulatory protein of striated muscle contraction. It consists of three components: Troponin-I (Tn-I) which is the inhibitor of actomyosin ATPase, Troponin-T (Tn-T) which contains the binding site for tropomyosin and Troponin-C (Tn-C). The binding of calcium to Tn-C abolishes the inhibitory action of Tn on actin filaments. The chain is Troponin C, isoallergen Bla g 6.0101 from Blattella germanica (German cockroach).